The sequence spans 429 residues: Adenylosuccinate synthetase (429 aa).

GTP contacts are provided by residues glycine 12–lysine 18 and glycine 40–threonine 42. The Proton acceptor role is filled by aspartate 13. Residues aspartate 13 and glycine 40 each contribute to the Mg(2+) site. IMP is bound by residues aspartate 13–lysine 16, asparagine 38–histidine 41, threonine 128, arginine 142, glutamine 223, and arginine 302. Catalysis depends on histidine 41, which acts as the Proton donor. Threonine 298 to arginine 304 contacts substrate. GTP contacts are provided by residues arginine 304, leucine 330 to aspartate 332, and serine 412 to glycine 414.

This sequence belongs to the adenylosuccinate synthetase family. In terms of assembly, homodimer. Mg(2+) is required as a cofactor.

The protein localises to the cytoplasm. It catalyses the reaction IMP + L-aspartate + GTP = N(6)-(1,2-dicarboxyethyl)-AMP + GDP + phosphate + 2 H(+). Its pathway is purine metabolism; AMP biosynthesis via de novo pathway; AMP from IMP: step 1/2. Its function is as follows. Plays an important role in the de novo pathway of purine nucleotide biosynthesis. Catalyzes the first committed step in the biosynthesis of AMP from IMP. This is Adenylosuccinate synthetase from Lactobacillus delbrueckii subsp. bulgaricus (strain ATCC 11842 / DSM 20081 / BCRC 10696 / JCM 1002 / NBRC 13953 / NCIMB 11778 / NCTC 12712 / WDCM 00102 / Lb 14).